The following is a 342-amino-acid chain: uncharacterized protein (342 aa).

3 helical membrane-spanning segments follow: residues 35 to 55 (YFRV…WCFS), 134 to 154 (LLFL…IIYF), and 161 to 180 (LFIT…YCFS). 2 disordered regions span residues 198-220 (SSDN…QQYN) and 311-342 (IINN…NYTN).

The protein localises to the membrane. This is an uncharacterized protein from Dictyostelium discoideum (Social amoeba).